The primary structure comprises 646 residues: Sulfate transporter 3.2 (646 aa).

The Cytoplasmic segment spans residues 1 to 76 (MSSKRASQYH…GYSLEYLKSD (76 aa)). Residues 77-97 (VISGITIASLAIPQGISYAQL) traverse the membrane as a helical segment. At 98–99 (AN) the chain is on the extracellular side. A helical membrane pass occupies residues 100–120 (LPPILGLYSSLVPPLVYAIMG). Topologically, residues 121-124 (SSRD) are cytoplasmic. A helical membrane pass occupies residues 125-145 (LAVGTVAVASLLTAAMLGKEV). Over 146–154 (NAVVNPKLY) the chain is Extracellular. Residues 155–175 (LHLAFTATFFAGLMQTCLGLL) form a helical membrane-spanning segment. R176 is a topological domain (cytoplasmic). The chain crosses the membrane as a helical span at residues 177–197 (LGFVVEILSHAAIVGFMGGAA). Residues 198-235 (TVVCLQQLKGLLGLHHFTHSTDIVTVLRSIFSQSHMWR) lie on the Extracellular side of the membrane. The helical transmembrane segment at 236 to 256 (WESGVLGCCFLIFLLTTKYIS) threads the bilayer. The Cytoplasmic segment spans residues 257–262 (KKRPKL). Residues 263 to 283 (FWISAMSPLVSVIFGTIFLYF) form a helical membrane-spanning segment. Topologically, residues 284–315 (LHDQFHGIQFIGELKKGINPPSITHLVFTPPY) are extracellular. The chain crosses the membrane as a helical span at residues 316–336 (VMLALKVGIITGVIALAEGIA). Residues 337 to 354 (VGRSFAMYKNYNIDGNKE) are Cytoplasmic-facing. A helical transmembrane segment spans residues 355 to 375 (MIAFGMMNILGSFSSCYLTTG). Residues 376–390 (PFSRSAVNYNAGCKT) are Extracellular-facing. 2 consecutive transmembrane segments (helical) span residues 391–411 (ALSN…LTPL) and 412–432 (FFYT…LGLV). Topologically, residues 433 to 447 (DYEAAIHLWKLDKFD) are extracellular. Residues 448-468 (FFVCLSAYLGVVFGTIEIGLI) form a helical membrane-spanning segment. Residues 469–646 (LSVGISVMRL…DSPVPEFNNV (178 aa)) are Cytoplasmic-facing. An STAS domain is found at 504–627 (HYPQAITRSS…LTVAEAVAAC (124 aa)).

It belongs to the SLC26A/SulP transporter (TC 2.A.53) family. As to expression, expressed only in leaves.

It is found in the membrane. Functionally, h(+)/sulfate cotransporter that may play a role in the regulation of sulfate assimilation. This is Sulfate transporter 3.2 (SULTR3;2) from Arabidopsis thaliana (Mouse-ear cress).